Here is a 219-residue protein sequence, read N- to C-terminus: Pyridoxine/pyridoxamine 5'-phosphate oxidase (219 aa).

Substrate contacts are provided by residues 13-16 (RVEY) and Lys76. Residues 71-76 (RSVLCK), 86-87 (FT), Lys93, and Gln115 contribute to the FMN site. Positions 133, 137, and 141 each coordinate substrate. FMN contacts are provided by residues 150 to 151 (QS) and Trp196. Residue 202 to 204 (RVH) coordinates substrate. Arg206 contacts FMN.

This sequence belongs to the pyridoxamine 5'-phosphate oxidase family. In terms of assembly, homodimer. FMN serves as cofactor.

The enzyme catalyses pyridoxamine 5'-phosphate + O2 + H2O = pyridoxal 5'-phosphate + H2O2 + NH4(+). The catalysed reaction is pyridoxine 5'-phosphate + O2 = pyridoxal 5'-phosphate + H2O2. Its pathway is cofactor metabolism; pyridoxal 5'-phosphate salvage; pyridoxal 5'-phosphate from pyridoxamine 5'-phosphate: step 1/1. It functions in the pathway cofactor metabolism; pyridoxal 5'-phosphate salvage; pyridoxal 5'-phosphate from pyridoxine 5'-phosphate: step 1/1. Functionally, catalyzes the oxidation of either pyridoxine 5'-phosphate (PNP) or pyridoxamine 5'-phosphate (PMP) into pyridoxal 5'-phosphate (PLP). This chain is Pyridoxine/pyridoxamine 5'-phosphate oxidase, found in Mycobacterium leprae (strain TN).